The primary structure comprises 305 residues: Ornithine carbamoyltransferase (305 aa).

Carbamoyl phosphate contacts are provided by residues Ser-52–Thr-55, Gln-79, Arg-103, and His-130–Gln-133. Residues Asn-162, Asp-224, and Ser-228–Met-229 each bind L-ornithine. Residues Cys-264–Leu-265 and Arg-292 contribute to the carbamoyl phosphate site.

The protein belongs to the aspartate/ornithine carbamoyltransferase superfamily. OTCase family.

The protein localises to the cytoplasm. It catalyses the reaction carbamoyl phosphate + L-ornithine = L-citrulline + phosphate + H(+). It functions in the pathway amino-acid biosynthesis; L-arginine biosynthesis; L-arginine from L-ornithine and carbamoyl phosphate: step 1/3. Reversibly catalyzes the transfer of the carbamoyl group from carbamoyl phosphate (CP) to the N(epsilon) atom of ornithine (ORN) to produce L-citrulline. This chain is Ornithine carbamoyltransferase, found in Pyrobaculum aerophilum (strain ATCC 51768 / DSM 7523 / JCM 9630 / CIP 104966 / NBRC 100827 / IM2).